A 122-amino-acid chain; its full sequence is Large ribosomal subunit protein uL14 (122 aa).

It belongs to the universal ribosomal protein uL14 family. As to quaternary structure, part of the 50S ribosomal subunit. Forms a cluster with proteins L3 and L19. In the 70S ribosome, L14 and L19 interact and together make contacts with the 16S rRNA in bridges B5 and B8.

Functionally, binds to 23S rRNA. Forms part of two intersubunit bridges in the 70S ribosome. The polypeptide is Large ribosomal subunit protein uL14 (Ruegeria pomeroyi (strain ATCC 700808 / DSM 15171 / DSS-3) (Silicibacter pomeroyi)).